A 196-amino-acid chain; its full sequence is Ribosome maturation factor RimP (196 aa).

Residues 164 to 196 (LAPQKPNKPGPKKPGHEKKKPSNESAAGKPRAE) form a disordered region. A compositionally biased stretch (basic residues) spans 173–182 (GPKKPGHEKK).

The protein belongs to the RimP family.

The protein resides in the cytoplasm. In terms of biological role, required for maturation of 30S ribosomal subunits. This chain is Ribosome maturation factor RimP, found in Xanthomonas euvesicatoria pv. vesicatoria (strain 85-10) (Xanthomonas campestris pv. vesicatoria).